Consider the following 258-residue polypeptide: Regulatory protein RecX (258 aa).

This sequence belongs to the RecX family.

The protein localises to the cytoplasm. Its function is as follows. Modulates RecA activity. This chain is Regulatory protein RecX, found in Streptococcus pneumoniae (strain P1031).